Consider the following 228-residue polypeptide: DNA mismatch repair protein MutH (228 aa).

It belongs to the MutH family.

The protein resides in the cytoplasm. Its function is as follows. Sequence-specific endonuclease that cleaves unmethylated GATC sequences. It is involved in DNA mismatch repair. This is DNA mismatch repair protein MutH from Yersinia pseudotuberculosis serotype IB (strain PB1/+).